The following is a 278-amino-acid chain: Pantothenate synthetase (278 aa).

27–34 (MGYLHEGH) contributes to the ATP binding site. His-34 acts as the Proton donor in catalysis. A (R)-pantoate-binding site is contributed by Gln-58. Gln-58 is a binding site for beta-alanine. 144–147 (GQKD) lines the ATP pocket. Residue Gln-150 participates in (R)-pantoate binding. ATP is bound by residues Val-173 and 181-184 (MSSR).

It belongs to the pantothenate synthetase family. In terms of assembly, homodimer.

The protein resides in the cytoplasm. It carries out the reaction (R)-pantoate + beta-alanine + ATP = (R)-pantothenate + AMP + diphosphate + H(+). It functions in the pathway cofactor biosynthesis; (R)-pantothenate biosynthesis; (R)-pantothenate from (R)-pantoate and beta-alanine: step 1/1. Its function is as follows. Catalyzes the condensation of pantoate with beta-alanine in an ATP-dependent reaction via a pantoyl-adenylate intermediate. This is Pantothenate synthetase from Roseiflexus sp. (strain RS-1).